Consider the following 377-residue polypeptide: Putative efflux system component YknX (377 aa).

A helical transmembrane segment spans residues Lys-3 to Tyr-23. Residues Thr-95–Glu-187 are a coiled coil.

It belongs to the membrane fusion protein (MFP) (TC 8.A.1) family. As to quaternary structure, part of a complex composed of YknX, YknY and YknZ. The complex interacts with YknW.

The protein resides in the cell membrane. In terms of biological role, part of an unusual four-component transporter, which is required for protection against the killing factor SdpC (sporulation-delaying protein). The sequence is that of Putative efflux system component YknX (yknX) from Bacillus subtilis (strain 168).